The primary structure comprises 181 residues: Protein GrpE (181 aa).

Positions M1–T10 are enriched in polar residues. Residues M1–A33 are disordered. Low complexity predominate over residues Q21 to A33.

It belongs to the GrpE family. In terms of assembly, homodimer.

Its subcellular location is the cytoplasm. Functionally, participates actively in the response to hyperosmotic and heat shock by preventing the aggregation of stress-denatured proteins, in association with DnaK and GrpE. It is the nucleotide exchange factor for DnaK and may function as a thermosensor. Unfolded proteins bind initially to DnaJ; upon interaction with the DnaJ-bound protein, DnaK hydrolyzes its bound ATP, resulting in the formation of a stable complex. GrpE releases ADP from DnaK; ATP binding to DnaK triggers the release of the substrate protein, thus completing the reaction cycle. Several rounds of ATP-dependent interactions between DnaJ, DnaK and GrpE are required for fully efficient folding. This Burkholderia cenocepacia (strain ATCC BAA-245 / DSM 16553 / LMG 16656 / NCTC 13227 / J2315 / CF5610) (Burkholderia cepacia (strain J2315)) protein is Protein GrpE.